We begin with the raw amino-acid sequence, 241 residues long: tRNA pseudouridine synthase A (241 aa).

Aspartate 51 (nucleophile) is an active-site residue. A substrate-binding site is contributed by tyrosine 110.

Belongs to the tRNA pseudouridine synthase TruA family. In terms of assembly, homodimer.

The enzyme catalyses uridine(38/39/40) in tRNA = pseudouridine(38/39/40) in tRNA. Its function is as follows. Formation of pseudouridine at positions 38, 39 and 40 in the anticodon stem and loop of transfer RNAs. This Campylobacter jejuni subsp. jejuni serotype O:23/36 (strain 81-176) protein is tRNA pseudouridine synthase A.